Consider the following 893-residue polypeptide: TBC domain-containing protein kinase-like protein (893 aa).

The 273-residue stretch at 1–273 (MFPLKDAEMG…PDQLMKDKVF (273 aa)) folds into the Protein kinase domain. A Rab-GAP TBC domain is found at 466-651 (DIPPLMRGLT…HLWDTLLLGN (186 aa)). The interval 710-749 (YRQHAQPPKPSSDSSGGRSSAPYFSAECPDPPKTDLSRES) is disordered. The span at 720–729 (SSDSSGGRSS) shows a compositional bias: low complexity. Residues 790-889 (SKPKLLVVDI…IKPTGLLTIP (100 aa)) enclose the Rhodanese domain.

It belongs to the protein kinase superfamily. Component of the FERRY complex composed of five subunits, TBCK, PPP1R21, FERRY3, CRYZL1 and GATD1 with a ratio of 1:2:1:2:4, respectively.

Its subcellular location is the cytoplasm. The protein localises to the cytoskeleton. It is found in the spindle. It localises to the midbody. The protein resides in the early endosome. Component of the FERRY complex (Five-subunit Endosomal Rab5 and RNA/ribosome intermediary). The FERRY complex directly interacts with mRNAs and RAB5A, and functions as a RAB5A effector involved in the localization and the distribution of specific mRNAs most likely by mediating their endosomal transport. The complex recruits mRNAs and ribosomes to early endosomes through direct mRNA-interaction. Also involved in the modulation of mTOR signaling and expression of mTOR complex components. Involved in the control of actin-cytoskeleton organization. This chain is TBC domain-containing protein kinase-like protein, found in Homo sapiens (Human).